The primary structure comprises 111 residues: UPF0339 protein ACIAD0721 (111 aa).

2 consecutive repeat copies span residues 10–58 (AKDG…RYER) and 61–109 (AKND…VKDL). Residues 89 to 111 (SRDKGIESVKNNGTTATVKDLTG) form a disordered region.

It belongs to the UPF0339 family. Duplicated subfamily.

The chain is UPF0339 protein ACIAD0721 from Acinetobacter baylyi (strain ATCC 33305 / BD413 / ADP1).